The sequence spans 102 residues: 10 kDa heat shock protein, mitochondrial (102 aa).

Ala2 carries the N-acetylalanine modification. The residue at position 8 (Lys8) is an N6-acetyllysine. At Lys28 the chain carries N6-succinyllysine. Lys40 bears the N6-acetyllysine; alternate mark. Residues Lys40, Lys54, and Lys56 each carry the N6-malonyllysine; alternate modification. 5 positions are modified to N6-succinyllysine; alternate: Lys40, Lys54, Lys56, Lys66, and Lys70. Lys56, Lys66, and Lys70 each carry N6-acetyllysine; alternate. Position 79 is a phosphothreonine (Thr79). N6-acetyllysine; alternate occurs at positions 80 and 86. N6-succinyllysine; alternate is present on residues Lys80 and Lys86. Lys99 carries the post-translational modification N6-acetyllysine.

Belongs to the GroES chaperonin family. In terms of assembly, homoheptamer arranged in a ring structure. 2 heptameric Hsp10 rings interact with a Hsp60 tetradecamer in the structure of a back-to-back double heptameric ring to form the symmetrical football complex.

Its subcellular location is the mitochondrion matrix. Co-chaperonin implicated in mitochondrial protein import and macromolecular assembly. Together with Hsp60, facilitates the correct folding of imported proteins. May also prevent misfolding and promote the refolding and proper assembly of unfolded polypeptides generated under stress conditions in the mitochondrial matrix. The functional units of these chaperonins consist of heptameric rings of the large subunit Hsp60, which function as a back-to-back double ring. In a cyclic reaction, Hsp60 ring complexes bind one unfolded substrate protein per ring, followed by the binding of ATP and association with 2 heptameric rings of the co-chaperonin Hsp10. This leads to sequestration of the substrate protein in the inner cavity of Hsp60 where, for a certain period of time, it can fold undisturbed by other cell components. Synchronous hydrolysis of ATP in all Hsp60 subunits results in the dissociation of the chaperonin rings and the release of ADP and the folded substrate protein. This is 10 kDa heat shock protein, mitochondrial (HSPE1) from Bos taurus (Bovine).